A 45-amino-acid polypeptide reads, in one-letter code: Mu-conotoxin-like Cal 12.1.2g (45 aa).

Intrachain disulfides connect Cys3-Cys16, Cys11-Cys28, Cys18-Cys33, and Cys27-Cys39. Pro23 carries the post-translational modification 4-hydroxyproline. A 6'-bromotryptophan mark is found at Trp37 and Trp38. Pro40 is subject to 4-hydroxyproline.

In terms of tissue distribution, expressed by the venom duct.

The protein resides in the secreted. In terms of biological role, mu-conotoxins block voltage-gated sodium channels. This toxin reversibly blocks voltage-gated sodium channel in cephalopods, with no alteration in the voltage dependence of sodium conductance or on the kinetics of inactivation. The protein is Mu-conotoxin-like Cal 12.1.2g of Californiconus californicus (California cone).